Here is a 143-residue protein sequence, read N- to C-terminus: Deoxyuridine 5'-triphosphate nucleotidohydrolase (143 aa).

The dUMP site is built by S65, V78, R132, and G138.

This sequence belongs to the dUTPase family. Homotrimer. Requires Mg(2+) as cofactor.

It carries out the reaction dUTP + H2O = dUMP + diphosphate + H(+). Its pathway is pyrimidine metabolism; dUMP biosynthesis; dUMP from dCTP (dUTP route): step 2/2. Its function is as follows. Involved in nucleotide metabolism via production of dUMP, the immediate precursor of thymidine nucleotides, and decreases the intracellular concentration of dUTP so that uracil cannot be incorporated into DNA. The sequence is that of Deoxyuridine 5'-triphosphate nucleotidohydrolase (DUT1) from Antonospora locustae (Microsporidian parasite).